The following is a 269-amino-acid chain: tRNA pseudouridine synthase A (269 aa).

The active-site Nucleophile is the Asp55. Tyr111 serves as a coordination point for substrate.

The protein belongs to the tRNA pseudouridine synthase TruA family.

The enzyme catalyses uridine(38/39/40) in tRNA = pseudouridine(38/39/40) in tRNA. Formation of pseudouridine at positions 38, 39 and 40 in the anticodon stem and loop of transfer RNAs. The sequence is that of tRNA pseudouridine synthase A from Methanosarcina mazei (strain ATCC BAA-159 / DSM 3647 / Goe1 / Go1 / JCM 11833 / OCM 88) (Methanosarcina frisia).